A 218-amino-acid chain; its full sequence is 7-cyano-7-deazaguanine synthase (218 aa).

10–20 (FSGGQDSTTCL) is an ATP binding site. The Zn(2+) site is built by Cys-186, Cys-195, Cys-198, and Cys-201.

Belongs to the QueC family. As to quaternary structure, homodimer. Zn(2+) is required as a cofactor.

The enzyme catalyses 7-carboxy-7-deazaguanine + NH4(+) + ATP = 7-cyano-7-deazaguanine + ADP + phosphate + H2O + H(+). It functions in the pathway purine metabolism; 7-cyano-7-deazaguanine biosynthesis. Functionally, catalyzes the ATP-dependent conversion of 7-carboxy-7-deazaguanine (CDG) to 7-cyano-7-deazaguanine (preQ(0)). This Exiguobacterium sibiricum (strain DSM 17290 / CCUG 55495 / CIP 109462 / JCM 13490 / 255-15) protein is 7-cyano-7-deazaguanine synthase.